The primary structure comprises 303 residues: Methionyl-tRNA formyltransferase (303 aa).

108 to 111 (SDLP) provides a ligand contact to (6S)-5,6,7,8-tetrahydrofolate.

The protein belongs to the Fmt family.

It catalyses the reaction L-methionyl-tRNA(fMet) + (6R)-10-formyltetrahydrofolate = N-formyl-L-methionyl-tRNA(fMet) + (6S)-5,6,7,8-tetrahydrofolate + H(+). In terms of biological role, attaches a formyl group to the free amino group of methionyl-tRNA(fMet). The formyl group appears to play a dual role in the initiator identity of N-formylmethionyl-tRNA by promoting its recognition by IF2 and preventing the misappropriation of this tRNA by the elongation apparatus. In Rickettsia africae (strain ESF-5), this protein is Methionyl-tRNA formyltransferase.